Consider the following 288-residue polypeptide: L-threonine kinase (288 aa).

80 to 90 (PIAKGMASSTA) serves as a coordination point for ATP.

It belongs to the GHMP kinase family. PduX subfamily.

The protein localises to the cytoplasm. It carries out the reaction L-threonine + ATP = O-phospho-L-threonine + ADP + H(+). It functions in the pathway cofactor biosynthesis; adenosylcobalamin biosynthesis. The protein operates within polyol metabolism; 1,2-propanediol degradation. L-threonine kinase that catalyzes the conversion of L-threonine to L-threonine-O-3-phosphate. Involved in the de novo synthesis of adenosylcobalamin (coenzyme B12) and the assimilation of cobyric acid. Functionally, expression of a cosmid containing the full 21-gene pdu operon in E.coli allows E.coli to grow on 1,2-propanediol (1,2-PD) with the appearance of bacterial microcompartments (BMC) in its cytoplasm. In terms of biological role, the 1,2-PD-specific bacterial microcompartment (BMC) concentrates low levels of 1,2-PD catabolic enzymes, concentrates volatile reaction intermediates thus enhancing pathway flux and keeps the level of toxic, mutagenic propionaldehyde low. This gene probably benefits from its induction via the Pdu promoter, rather than a physical interaction with the BMC. In Citrobacter freundii, this protein is L-threonine kinase.